A 153-amino-acid polypeptide reads, in one-letter code: 6,7-dimethyl-8-ribityllumazine synthase (153 aa).

Residues Phe-22, 56 to 58 (AFE), and 80 to 82 (AVI) contribute to the 5-amino-6-(D-ribitylamino)uracil site. Residue 85–86 (ST) coordinates (2S)-2-hydroxy-3-oxobutyl phosphate. His-88 serves as the catalytic Proton donor. Phe-113 is a 5-amino-6-(D-ribitylamino)uracil binding site. Residue Arg-127 coordinates (2S)-2-hydroxy-3-oxobutyl phosphate.

This sequence belongs to the DMRL synthase family.

The catalysed reaction is (2S)-2-hydroxy-3-oxobutyl phosphate + 5-amino-6-(D-ribitylamino)uracil = 6,7-dimethyl-8-(1-D-ribityl)lumazine + phosphate + 2 H2O + H(+). The protein operates within cofactor biosynthesis; riboflavin biosynthesis; riboflavin from 2-hydroxy-3-oxobutyl phosphate and 5-amino-6-(D-ribitylamino)uracil: step 1/2. In terms of biological role, catalyzes the formation of 6,7-dimethyl-8-ribityllumazine by condensation of 5-amino-6-(D-ribitylamino)uracil with 3,4-dihydroxy-2-butanone 4-phosphate. This is the penultimate step in the biosynthesis of riboflavin. This chain is 6,7-dimethyl-8-ribityllumazine synthase, found in Clostridium botulinum (strain Alaska E43 / Type E3).